Consider the following 149-residue polypeptide: SsrA-binding protein (149 aa).

The tract at residues 121–149 (GKKQHDKRADELDKDSKREAQRAMKERQR) is disordered. Basic and acidic residues predominate over residues 127–149 (KRADELDKDSKREAQRAMKERQR).

This sequence belongs to the SmpB family.

It is found in the cytoplasm. In terms of biological role, required for rescue of stalled ribosomes mediated by trans-translation. Binds to transfer-messenger RNA (tmRNA), required for stable association of tmRNA with ribosomes. tmRNA and SmpB together mimic tRNA shape, replacing the anticodon stem-loop with SmpB. tmRNA is encoded by the ssrA gene; the 2 termini fold to resemble tRNA(Ala) and it encodes a 'tag peptide', a short internal open reading frame. During trans-translation Ala-aminoacylated tmRNA acts like a tRNA, entering the A-site of stalled ribosomes, displacing the stalled mRNA. The ribosome then switches to translate the ORF on the tmRNA; the nascent peptide is terminated with the 'tag peptide' encoded by the tmRNA and targeted for degradation. The ribosome is freed to recommence translation, which seems to be the essential function of trans-translation. The polypeptide is SsrA-binding protein (Dechloromonas aromatica (strain RCB)).